A 209-amino-acid chain; its full sequence is Protein GrpE (209 aa).

Positions 1–18 (MKIFNKDGNKNSKEDTKA) are enriched in basic and acidic residues. The tract at residues 1–60 (MKIFNKDGNKNSKEDTKAGAENSEAQNSGSSAEEVNKARENPEEASASSEAEKSPEVKCQ) is disordered. Polar residues predominate over residues 23-33 (SEAQNSGSSAE). A compositionally biased stretch (basic and acidic residues) spans 50-60 (EAEKSPEVKCQ).

The protein belongs to the GrpE family. Homodimer.

It localises to the cytoplasm. Participates actively in the response to hyperosmotic and heat shock by preventing the aggregation of stress-denatured proteins, in association with DnaK and GrpE. It is the nucleotide exchange factor for DnaK and may function as a thermosensor. Unfolded proteins bind initially to DnaJ; upon interaction with the DnaJ-bound protein, DnaK hydrolyzes its bound ATP, resulting in the formation of a stable complex. GrpE releases ADP from DnaK; ATP binding to DnaK triggers the release of the substrate protein, thus completing the reaction cycle. Several rounds of ATP-dependent interactions between DnaJ, DnaK and GrpE are required for fully efficient folding. The chain is Protein GrpE from Methanosarcina barkeri (strain Fusaro / DSM 804).